The sequence spans 452 residues: Tubulin alpha-6 chain (452 aa).

8 residues coordinate GTP: Q11, E69, S138, G142, T143, T177, N204, and N226. E69 lines the Mg(2+) pocket. Residue E252 is part of the active site.

It belongs to the tubulin family. As to quaternary structure, dimer of alpha and beta chains. A typical microtubule is a hollow water-filled tube with an outer diameter of 25 nm and an inner diameter of 15 nM. Alpha-beta heterodimers associate head-to-tail to form protofilaments running lengthwise along the microtubule wall with the beta-tubulin subunit facing the microtubule plus end conferring a structural polarity. Microtubules usually have 13 protofilaments but different protofilament numbers can be found in some organisms and specialized cells. Mg(2+) is required as a cofactor.

The protein resides in the cytoplasm. Its subcellular location is the cytoskeleton. The protein localises to the spindle. It carries out the reaction GTP + H2O = GDP + phosphate + H(+). In terms of biological role, tubulin is the major constituent of microtubules, a cylinder consisting of laterally associated linear protofilaments composed of alpha- and beta-tubulin heterodimers. Microtubules grow by the addition of GTP-tubulin dimers to the microtubule end, where a stabilizing cap forms. Below the cap, tubulin dimers are in GDP-bound state, owing to GTPase activity of alpha-tubulin. The polypeptide is Tubulin alpha-6 chain (TUBA6) (Naegleria pringsheimi (Amoeba)).